Here is a 750-residue protein sequence, read N- to C-terminus: Cellulose synthase-like protein H1 (750 aa).

A run of 2 helical transmembrane segments spans residues 27–47 (LAIL…DSGA) and 52–72 (AALA…NAKW). Active-site residues include Asp-137 and Asp-459. 6 consecutive transmembrane segments (helical) span residues 537–557 (VWPV…YCLL), 570–590 (GFYI…MEFI), 608–628 (ITSA…TLGF), 664–684 (VFIP…VGAW), 697–717 (GPGI…MPLL), and 727–747 (GIPW…LLFC).

The protein belongs to the glycosyltransferase 2 family. Plant cellulose synthase-like H subfamily.

It is found in the golgi apparatus membrane. Functionally, thought to be a Golgi-localized beta-glycan synthase that polymerize the backbones of noncellulosic polysaccharides (hemicelluloses) of plant cell wall. In Oryza sativa subsp. japonica (Rice), this protein is Cellulose synthase-like protein H1 (CSLH1).